We begin with the raw amino-acid sequence, 147 residues long: Hemoglobin subunit epsilon (147 aa).

In terms of domain architecture, Globin spans 3 to 147 (HFTAEEKAAV…VAIALAHKYH (145 aa)). A phosphoserine mark is found at Ser14 and Ser51. Positions 64 and 93 each coordinate heme b.

It belongs to the globin family. In terms of assembly, heterotetramer of two alpha chains and two epsilon chains in early embryonic hemoglobin Gower-2; two zeta chains and two epsilon chains in early embryonic hemoglobin Gower-1. In terms of tissue distribution, red blood cells.

Functionally, the epsilon chain is a beta-type chain of early mammalian embryonic hemoglobin. This chain is Hemoglobin subunit epsilon (HBE1), found in Symphalangus syndactylus (Siamang).